The chain runs to 1430 residues: Nephrocystin-4 (1430 aa).

A sufficient for basal bodies localization region spans residues 824 to 1430 (MRMGNVGRPP…ETFCVKVRYE (607 aa)). The tract at residues 828 to 857 (NVGRPPEKKLKRRETLPPSNSRIITMHDGR) is disordered.

Belongs to the NPHP4 family.

It is found in the cytoplasm. The protein localises to the cytoskeleton. Its subcellular location is the cilium basal body. Functionally, involved in the organization of apical junctions. Required for building functional cilia. Involved in the organization of the subapical actin network in multiciliated epithelial cells. Seems to recruit int to basal bodies of motile cilia which subsequently interacts with actin-modifying proteins such as daam1. May down-regulate the canonical Wnt pathway and promote the Wnt-PCP pathway. Acts as a negative regulator of the hippo pathway. This chain is Nephrocystin-4 (nphp4), found in Xenopus laevis (African clawed frog).